Here is a 327-residue protein sequence, read N- to C-terminus: UDP-N-acetylenolpyruvoylglucosamine reductase (327 aa).

The FAD-binding PCMH-type domain occupies 42–223 (RTGGLAELFY…RAAMDEVALH (182 aa)). The active site involves arginine 188. Catalysis depends on serine 237, which acts as the Proton donor. Residue glutamate 307 is part of the active site.

It belongs to the MurB family. The cofactor is FAD.

Its subcellular location is the cytoplasm. The catalysed reaction is UDP-N-acetyl-alpha-D-muramate + NADP(+) = UDP-N-acetyl-3-O-(1-carboxyvinyl)-alpha-D-glucosamine + NADPH + H(+). It participates in cell wall biogenesis; peptidoglycan biosynthesis. Its function is as follows. Cell wall formation. The protein is UDP-N-acetylenolpyruvoylglucosamine reductase of Bartonella tribocorum (strain CIP 105476 / IBS 506).